A 315-amino-acid polypeptide reads, in one-letter code: Calumenin-B (315 aa).

The first 19 residues, 1-19 (MEQWPLLFVVALCILQSSS), serve as a signal peptide directing secretion. Residues 22-39 (MEKKDRVHHDAPLSNKDH) are compositionally biased toward basic and acidic residues. The segment at 22–42 (MEKKDRVHHDAPLSNKDHDDE) is disordered. EF-hand domains follow at residues 68 to 103 (ESKERLGKIVEKIDEDHDGFVTADEMKRWIKHAQRR), 104 to 139 (WIYEDVDRQWQAHDLNSDSFVSWEEYKDATYGYILD), 151 to 186 (QMMTRDERRFKMADQDGDLRANKEEFTAFLHPEEFD), 188 to 223 (MKDIVVLETMEDIDKNGDGLIDLNEYIGDMYSQNGD), 229 to 264 (WVKTEREQFTEFRDKNKDGRMDKDETRDWILPADYD), and 265 to 300 (HAEAEAKHLLYESDADKDGRLTKQEIVDKYDLFVGS). Asp-81, Asp-83, Asp-85, Glu-92, Asp-117, Asn-119, Asp-121, Glu-128, Asp-164, Asp-166, Asp-168, Arg-170, Glu-175, Asp-201, Asn-203, Asp-205, Glu-212, Asp-242, Asn-244, Asp-246, Arg-248, Glu-253, Asp-278, Asp-280, Asp-282, Arg-284, and Glu-289 together coordinate Ca(2+). The Prevents secretion from ER motif lies at 312 to 315 (HDEF).

The protein belongs to the CREC family. As to quaternary structure, interacts with ggcx.

The protein localises to the endoplasmic reticulum membrane. The protein resides in the golgi apparatus. It is found in the secreted. Its subcellular location is the melanosome. It localises to the sarcoplasmic reticulum lumen. In terms of biological role, involved in regulation of vitamin K-dependent carboxylation of multiple N-terminal glutamate residues. Seems to inhibit gamma-carboxylase ggcx. Binds 7 calcium ions with a low affinity. In Danio rerio (Zebrafish), this protein is Calumenin-B (calub).